Consider the following 517-residue polypeptide: Shugoshin 1 (517 aa).

Residues 1–89 (MAKERCQKRS…DVILQLRKEC (89 aa)) adopt a coiled-coil conformation. The segment at 1–176 (MAKERCQKRS…DFDSGKVEST (176 aa)) is necessary for interaction with PPP2CA and PPP2R1A. 4 disordered regions span residues 107 to 136 (QSEE…LSGK), 149 to 173 (PYQT…SGKV), 267 to 317 (PEQI…TLDG), and 334 to 427 (HPTP…QESP). The stretch at 268 to 291 (EQIESKHKRARKRRAEQRRTKQRC) forms a coiled coil. Residues 273–302 (KHKRARKRRAEQRRTKQRCKSKSSLRSKGN) are compositionally biased toward basic residues. Positions 341 to 363 (KMNNGCNKETDSSNSEVSDLECS) are enriched in polar residues. Over residues 379 to 390 (RLRDYRESERAV) the composition is skewed to basic and acidic residues. Ser426 is modified (phosphoserine). The PXVXL/I motif motif lies at 441–445 (PRVKI). A D-box motif is present at residues 447-455 (KPSLPPKRR). Ser497 bears the Phosphoserine; by NEK2 mark.

Belongs to the shugoshin family. Interacts with PPP2CA (or PPP2CB), PPP2R1B, PPP2R5A, PPP2R5B, PPP2R5C, PPP2R5D, PPP2R5E, SET, LRRC59, RBM10 (or RBM5), RPL10A, RPL28, RPL7, RPL7A and RPLP1. Interaction with protein phosphatase 2A occurs most probably through direct binding to the regulatory B56 subunits: PPP2R1B, PPP2R5A, PPP2R5B, PPP2R5C, PPP2R5D, PPP2R5E. Interacts with PPP2R1A and NEK2. Interacts with CDCA8. Ubiquitinated and degraded during mitotic exit by APC/C-Cdh1. In terms of processing, phosphorylation by NEK2 is essential for chromosome congression in mitosis and for the proper attachment of spindle microtubule to the kinetochore. Phosphorylated by PLK1 and AUKRB. As to expression, ubiquitously expressed in proliferating cells. Moderately expressed in the oocytes.

It is found in the nucleus. Its subcellular location is the chromosome. The protein localises to the centromere. It localises to the kinetochore. The protein resides in the cytoplasm. It is found in the cytoskeleton. Its subcellular location is the spindle pole. The protein localises to the microtubule organizing center. It localises to the centrosome. The protein resides in the nucleus speckle. Its function is as follows. Plays a central role in chromosome cohesion during mitosis by preventing premature dissociation of cohesin complex from centromeres after prophase, when most of cohesin complex dissociates from chromosomes arms. May act by preventing phosphorylation of the STAG2 subunit of cohesin complex at the centromere, ensuring cohesin persistence at centromere until cohesin cleavage by ESPL1/separase at anaphase. Essential for proper chromosome segregation during mitosis and this function requires interaction with PPP2R1A. Its phosphorylated form is necessary for chromosome congression and for the proper attachment of spindle microtubule to the kinetochore. Necessary for kinetochore localization of PLK1 and CENPF. May play a role in the tension sensing mechanism of the spindle-assembly checkpoint by regulating PLK1 kinetochore affinity. Involved in centromeric enrichment of AUKRB in prometaphase. The sequence is that of Shugoshin 1 from Mus musculus (Mouse).